The following is a 156-amino-acid chain: Small ribosomal subunit protein uS7 (156 aa).

In terms of assembly, part of the 30S ribosomal subunit. Contacts proteins S9 and S11. Binds to the C-terminus of IF3 and to the C-terminus of Era.

In terms of biological role, one of the primary rRNA binding proteins, it binds directly to 3'-end of the 16S rRNA where it nucleates assembly of the head domain of the 30S subunit. Is located at the subunit interface close to the decoding center. Binds mRNA and the E site tRNA blocking its exit path in the ribosome. This blockage implies that this section of the ribosome must be able to move to release the deacetylated tRNA. In Thermus thermophilus (strain ATCC 27634 / DSM 579 / HB8), this protein is Small ribosomal subunit protein uS7 (rpsG).